Here is a 119-residue protein sequence, read N- to C-terminus: NADH-quinone oxidoreductase subunit A (119 aa).

3 consecutive transmembrane segments (helical) span residues 7 to 27 (FPVLLFILVGIGVGLVPMFLG), 63 to 83 (LIAILFILFDLETAFLFPWGV), and 88 to 108 (IGWFGYASMVIFLLEFIVGFV).

Belongs to the complex I subunit 3 family. As to quaternary structure, NDH-1 is composed of 14 different subunits. Subunits NuoA, H, J, K, L, M, N constitute the membrane sector of the complex.

The protein resides in the cell membrane. The catalysed reaction is a quinone + NADH + 5 H(+)(in) = a quinol + NAD(+) + 4 H(+)(out). NDH-1 shuttles electrons from NADH, via FMN and iron-sulfur (Fe-S) centers, to quinones in the respiratory chain. The immediate electron acceptor for the enzyme in this species is believed to be ubiquinone. Couples the redox reaction to proton translocation (for every two electrons transferred, four hydrogen ions are translocated across the cytoplasmic membrane), and thus conserves the redox energy in a proton gradient. This Polynucleobacter asymbioticus (strain DSM 18221 / CIP 109841 / QLW-P1DMWA-1) (Polynucleobacter necessarius subsp. asymbioticus) protein is NADH-quinone oxidoreductase subunit A.